The following is a 160-amino-acid chain: Phosphopantetheine adenylyltransferase (160 aa).

A substrate-binding site is contributed by Ser-9. ATP is bound by residues 9-10 (SL) and His-17. The substrate site is built by Lys-41, Leu-74, and Lys-88. Residues 89–91 (GIR), Glu-99, and 123–129 (YLHLSST) each bind ATP.

Belongs to the bacterial CoaD family. Homohexamer. Requires Mg(2+) as cofactor.

The protein resides in the cytoplasm. It carries out the reaction (R)-4'-phosphopantetheine + ATP + H(+) = 3'-dephospho-CoA + diphosphate. It participates in cofactor biosynthesis; coenzyme A biosynthesis; CoA from (R)-pantothenate: step 4/5. Reversibly transfers an adenylyl group from ATP to 4'-phosphopantetheine, yielding dephospho-CoA (dPCoA) and pyrophosphate. The chain is Phosphopantetheine adenylyltransferase from Renibacterium salmoninarum (strain ATCC 33209 / DSM 20767 / JCM 11484 / NBRC 15589 / NCIMB 2235).